A 147-amino-acid chain; its full sequence is Bis(5'-nucleosyl)-tetraphosphatase [asymmetrical] (147 aa).

Position 2 is an N-acetylalanine (A2). The region spanning 2 to 139 is the Nudix hydrolase domain; the sequence is ALRACGLIIF…EMKAALQEGH (138 aa). Positions 43–64 match the Nudix box motif; the sequence is GHVEPGESDLETALRETQEEAG.

This sequence belongs to the Nudix hydrolase family. Requires a divalent metal cation as cofactor.

It catalyses the reaction P(1),P(4)-bis(5'-guanosyl) tetraphosphate + H2O = GMP + GTP + 2 H(+). It carries out the reaction a 5'-end CoA-ribonucleoside in mRNA + H2O = a 5'-end phospho-adenosine-phospho-ribonucleoside in mRNA + (R)-4'-phosphopantetheine + 2 H(+). The enzyme catalyses a 5'-end FAD-phospho-ribonucleoside in mRNA + H2O = a 5'-end phospho-adenosine-phospho-ribonucleoside in mRNA + FMN + 2 H(+). In terms of biological role, catalyzes the asymmetric hydrolysis of diadenosine 5',5'''-P1,P4-tetraphosphate (Ap4A) to yield AMP and ATP. Exhibits decapping activity towards FAD-capped RNAs and dpCoA-capped RNAs in vitro. The polypeptide is Bis(5'-nucleosyl)-tetraphosphatase [asymmetrical] (NUDT2) (Bos taurus (Bovine)).